Consider the following 179-residue polypeptide: ATP synthase subunit b, chloroplastic (179 aa).

Residues 28 to 46 form a helical membrane-spanning segment; sequence IINIAALVGILIYAGRDFL.

The protein belongs to the ATPase B chain family. F-type ATPases have 2 components, F(1) - the catalytic core - and F(0) - the membrane proton channel. F(1) has five subunits: alpha(3), beta(3), gamma(1), delta(1), epsilon(1). F(0) has four main subunits: a(1), b(1), b'(1) and c(10-14). The alpha and beta chains form an alternating ring which encloses part of the gamma chain. F(1) is attached to F(0) by a central stalk formed by the gamma and epsilon chains, while a peripheral stalk is formed by the delta, b and b' chains.

The protein resides in the plastid. The protein localises to the chloroplast thylakoid membrane. F(1)F(0) ATP synthase produces ATP from ADP in the presence of a proton or sodium gradient. F-type ATPases consist of two structural domains, F(1) containing the extramembraneous catalytic core and F(0) containing the membrane proton channel, linked together by a central stalk and a peripheral stalk. During catalysis, ATP synthesis in the catalytic domain of F(1) is coupled via a rotary mechanism of the central stalk subunits to proton translocation. Functionally, component of the F(0) channel, it forms part of the peripheral stalk, linking F(1) to F(0). The polypeptide is ATP synthase subunit b, chloroplastic (Trieres chinensis (Marine centric diatom)).